The sequence spans 157 residues: S-ribosylhomocysteine lyase (157 aa).

Residues His53, His57, and Cys124 each coordinate Fe cation.

The protein belongs to the LuxS family. As to quaternary structure, homodimer. The cofactor is Fe cation.

The enzyme catalyses S-(5-deoxy-D-ribos-5-yl)-L-homocysteine = (S)-4,5-dihydroxypentane-2,3-dione + L-homocysteine. Its function is as follows. Involved in the synthesis of autoinducer 2 (AI-2) which is secreted by bacteria and is used to communicate both the cell density and the metabolic potential of the environment. The regulation of gene expression in response to changes in cell density is called quorum sensing. Catalyzes the transformation of S-ribosylhomocysteine (RHC) to homocysteine (HC) and 4,5-dihydroxy-2,3-pentadione (DPD). This chain is S-ribosylhomocysteine lyase, found in Borreliella afzelii (strain PKo) (Borrelia afzelii).